We begin with the raw amino-acid sequence, 620 residues long: 1-deoxy-D-xylulose-5-phosphate synthase (620 aa).

Residues histidine 80 and glycine 121 to serine 123 each bind thiamine diphosphate. Aspartate 152 contributes to the Mg(2+) binding site. Thiamine diphosphate contacts are provided by residues glycine 153–alanine 154, asparagine 181, tyrosine 288, and glutamate 370. Mg(2+) is bound at residue asparagine 181.

The protein belongs to the transketolase family. DXPS subfamily. As to quaternary structure, homodimer. The cofactor is Mg(2+). It depends on thiamine diphosphate as a cofactor.

The catalysed reaction is D-glyceraldehyde 3-phosphate + pyruvate + H(+) = 1-deoxy-D-xylulose 5-phosphate + CO2. The protein operates within metabolic intermediate biosynthesis; 1-deoxy-D-xylulose 5-phosphate biosynthesis; 1-deoxy-D-xylulose 5-phosphate from D-glyceraldehyde 3-phosphate and pyruvate: step 1/1. Catalyzes the acyloin condensation reaction between C atoms 2 and 3 of pyruvate and glyceraldehyde 3-phosphate to yield 1-deoxy-D-xylulose-5-phosphate (DXP). This chain is 1-deoxy-D-xylulose-5-phosphate synthase, found in Salmonella arizonae (strain ATCC BAA-731 / CDC346-86 / RSK2980).